The following is a 255-amino-acid chain: Taurine import ATP-binding protein TauB (255 aa).

The region spanning Leu-2–Ser-229 is the ABC transporter domain. Gly-34–Thr-41 serves as a coordination point for ATP.

This sequence belongs to the ABC transporter superfamily. Taurine importer (TC 3.A.1.17.1) family. In terms of assembly, the complex is composed of two ATP-binding proteins (TauB), two transmembrane proteins (TauC) and a solute-binding protein (TauA).

The protein localises to the cell inner membrane. The enzyme catalyses taurine(out) + ATP + H2O = taurine(in) + ADP + phosphate + H(+). In terms of biological role, part of the ABC transporter complex TauABC involved in taurine import. Responsible for energy coupling to the transport system. The polypeptide is Taurine import ATP-binding protein TauB (Escherichia coli (strain K12)).